The chain runs to 504 residues: Cytochrome P450 71B4 (504 aa).

The chain crosses the membrane as a helical span at residues 1–21; the sequence is MVSLLSFFLLLLVPIFFLLIF. C446 contacts heme.

Belongs to the cytochrome P450 family. Heme is required as a cofactor.

The protein resides in the membrane. This is Cytochrome P450 71B4 (CYP71B4) from Arabidopsis thaliana (Mouse-ear cress).